Consider the following 288-residue polypeptide: Killer cell lectin-like receptor 2 (288 aa).

At 1-45 (MSEQEVTYTTLRFHKSSGLQNPVRPEETQRPRDVGHRECSVPWKF) the chain is on the cytoplasmic side. Residues 46–66 (IVIVLGILCFLLLLTVAVLVI) traverse the membrane as a helical; Signal-anchor for type II membrane protein segment. Residues 67-288 (HIFRDGQEKH…SALQRDEDES (222 aa)) are Extracellular-facing. N94, N105, and N114 each carry an N-linked (GlcNAc...) asparagine glycan. One can recognise a C-type lectin domain in the interval 144 to 263 (QVEGYWFCCG…THGCICEKRL (120 aa)). 4 disulfides stabilise this stretch: C151-C156, C169-C257, C173-C259, and C238-C251. An N-linked (GlcNAc...) asparagine glycan is attached at N177.

As to quaternary structure, homodimer; disulfide-linked.

The protein resides in the membrane. In terms of biological role, receptor on natural killer (NK) cells for class I MHC. The protein is Killer cell lectin-like receptor 2 (Klra2) of Mus musculus (Mouse).